A 137-amino-acid chain; its full sequence is NADH-quinone oxidoreductase subunit A (137 aa).

The next 3 membrane-spanning stretches (helical) occupy residues 12–32 (WAFA…LGVS), 68–88 (LVAM…AWAV), and 94–114 (GWVG…GLVY).

The protein belongs to the complex I subunit 3 family. NDH-1 is composed of 13 different subunits. Subunits NuoA, H, J, K, L, M, N constitute the membrane sector of the complex.

It localises to the cell inner membrane. The enzyme catalyses a quinone + NADH + 5 H(+)(in) = a quinol + NAD(+) + 4 H(+)(out). In terms of biological role, NDH-1 shuttles electrons from NADH, via FMN and iron-sulfur (Fe-S) centers, to quinones in the respiratory chain. The immediate electron acceptor for the enzyme in this species is believed to be ubiquinone. Couples the redox reaction to proton translocation (for every two electrons transferred, four hydrogen ions are translocated across the cytoplasmic membrane), and thus conserves the redox energy in a proton gradient. This Ectopseudomonas mendocina (strain ymp) (Pseudomonas mendocina) protein is NADH-quinone oxidoreductase subunit A.